The primary structure comprises 131 residues: UPF0102 protein YraN (131 aa).

Residues 1–19 (MATVPTRSGSPRQLTTKQT) show a composition bias toward polar residues. The disordered stretch occupies residues 1-21 (MATVPTRSGSPRQLTTKQTGD).

This sequence belongs to the UPF0102 family.

The protein is UPF0102 protein YraN of Escherichia coli O127:H6 (strain E2348/69 / EPEC).